A 935-amino-acid polypeptide reads, in one-letter code: Progesterone receptor (935 aa).

The segment at 1–164 (MTELKAKGPR…PATQRVLSPL (164 aa)) is AF3; mediates transcriptional activation. Residues 1-256 (MTELKAKGPR…AAAGGGAAAV (256 aa)) are disordered. The modulating, Pro-Rich stretch occupies residues 1 to 568 (MTELKAKGPR…YSFESLPQKI (568 aa)). Residue S20 is modified to Phosphoserine. The LXXL motif 1 signature appears at 55–59 (LDGLL). Phosphoserine is present on S81. An LXXL motif 2 motif is present at residues 115–119 (LDTLL). Phosphoserine occurs at positions 130 and 162. Residues 165–305 (MSRSGGKAGD…LATTTMDFTH (141 aa)) are mediates transcriptional transrepression. The Nuclear localization signal motif lies at 183-187 (KVLPR). Residues S190 and S213 each carry the phosphoserine modification. Residues 220–231 (EVEEEDGSESED) show a composition bias toward acidic residues. The segment covering 232–246 (SAGPLLKGKPRALGG) has biased composition (low complexity). Phosphoserine; by MAPK1 is present on S294. Residues 328–353 (SYDGGAGAASAFAPPRSSPSASSTPV) are disordered. A compositionally biased stretch (low complexity) spans 335–350 (AASAFAPPRSSPSASS). S345 carries the phosphoserine; by MAPK modification. K388 participates in a covalent cross-link: Glycyl lysine isopeptide (Lys-Gly) (interchain with G-Cter in SUMO); alternate. K388 is covalently cross-linked (Glycyl lysine isopeptide (Lys-Gly) (interchain with G-Cter in ubiquitin); alternate). S400 is subject to Phosphoserine; by CDK2. The tract at residues 415–452 (PDFPLGPPPPLPPRAPPSRPGEAAVTAAPAGASVSSAS) is disordered. The segment covering 418–433 (PLGPPPPLPPRAPPSR) has biased composition (pro residues). Residues 434–452 (PGEAAVTAAPAGASVSSAS) are compositionally biased toward low complexity. The tract at residues 456–548 (STLECILYKA…VYPPYLNYLR (93 aa)) is AF1; mediates transcriptional activation. K533 participates in a covalent cross-link: Glycyl lysine isopeptide (Lys-Gly) (interchain with G-Cter in SUMO). 2 consecutive NR C4-type zinc fingers follow at residues 569 to 589 (CLICGDEASGCHYGVLTCGSC) and 605 to 629 (CAGRNDCIVDKIRRKNCPACRLRKC). Residues 569–641 (CLICGDEASG…AGMVLGGRKF (73 aa)) constitute a DNA-binding region (nuclear receptor). The residue at position 678 (S678) is a Phosphoserine. Residues 681 to 915 (QDIQLIPPLI…EFPEMMSEVI (235 aa)) enclose the NR LBD domain. The segment at 689-935 (LINLLVSIEP…MVKPLLFHKK (247 aa)) is AF2; mediates transcriptional activation. Position 768 (R768) interacts with progesterone.

Belongs to the nuclear hormone receptor family. In terms of assembly, interacts with SMARD1 and UNC45A. Interacts with CUEDC2; the interaction promotes ubiquitination, decreases sumoylation, and represses transcriptional activity. Interacts with PIAS3; the interaction promotes sumoylation of PR in a hormone-dependent manner, inhibits DNA-binding, and alters nuclear export. Interacts with SP1; the interaction requires ligand-induced phosphorylation on Ser-345 by ERK1/2-MAPK. Interacts with PRMT2. Interacts with NCOA2 and NCOA1. Interacts with KLF9. Interacts with GTF2B. Post-translationally, phosphorylated on multiple serine sites. Several of these sites are hormone-dependent. Phosphorylation on Ser-294 is highly hormone-dependent and modulates ubiquitination and sumoylation on Lys-388. Phosphorylation on Ser-345 also requires induction by hormone. Basal phosphorylation on Ser-81, Ser-162, Ser-190 and Ser-400 is increased in response to progesterone and can be phosphorylated in vitro by the CDK2-A1 complex. Increased levels of phosphorylation on Ser-400 also in the presence of EGF, heregulin, IGF, PMA and FBS. Phosphorylation at this site by CDK2 is ligand-independent, and increases nuclear translocation and transcriptional activity. Phosphorylation at Ser-162 and Ser-294, but not at Ser-190, is impaired during the G(2)/M phase of the cell cycle. Phosphorylation on Ser-345 by ERK1/2 MAPK is required for interaction with SP1. In terms of processing, sumoylation is hormone-dependent and represses transcriptional activity. Sumoylation on all three sites is enhanced by PIAS3. Desumoylated by SENP1. Sumoylation on Lys-388, the main site of sumoylation, is repressed by ubiquitination on the same site, and modulated by phosphorylation at Ser-294. Ubiquitination is hormone-dependent and represses sumoylation on the same site. Promoted by MAPK-mediated phosphorylation on Ser-294. Ubiquitinated by UBR5, leading to its degradation: UBR5 specifically recognizes and binds ligand-bound PGR when it is not associated with coactivators (NCOAs). In presence of NCOAs, the UBR5-degron is not accessible, preventing its ubiquitination and degradation. Post-translationally, palmitoylated by ZDHHC7 and ZDHHC21. Palmitoylation is required for plasma membrane targeting and for rapid intracellular signaling via ERK and AKT kinases and cAMP generation.

The protein resides in the nucleus. It localises to the cytoplasm. Functionally, the steroid hormones and their receptors are involved in the regulation of eukaryotic gene expression and affect cellular proliferation and differentiation in target tissues. Transcriptional activator of several progesteron-dependent promoters in a variety of cell types. Involved in activation of SRC-dependent MAPK signaling on hormone stimulation. The sequence is that of Progesterone receptor (PGR) from Macaca sylvanus (Barbary macaque).